Consider the following 426-residue polypeptide: MNAQHIAETLHALGSQAKAASALMARAPSAVKNRALLALARRLRDNTTALQADNARDLERARAAGLAEPMVDRLKLTPKVLETCALGCEQLATMGDVIGEISGMRQQPSGIRVGQMRVPIGVFGMIYESRPNVTIEAASLSIKSGNACILRGGSEAIDSNRALARLVQEALEEAGLPGDAVQLVQTTDREAVGHLIAMPQYVDVIIPRGGKGLIERISRDAKVPVIKHLDGNCHTYVDDPCDVAMAVKVADNAKTQKYSPCNASEGLLVARGVAAEFLPRIGAVYAAKGVEMRGCPETLALLAGVPGATLVHATEQDWSEEYLAPIISIKVVEGLDEAIAHINRYGSHHTDAILTRDHMHAQRFLREVDSASVMVNASTRFADGFEYGLGAEIGISTDKFHARGPVGIEGLTSLKWVVLGEGDIRA.

Belongs to the gamma-glutamyl phosphate reductase family.

The protein resides in the cytoplasm. The enzyme catalyses L-glutamate 5-semialdehyde + phosphate + NADP(+) = L-glutamyl 5-phosphate + NADPH + H(+). Its pathway is amino-acid biosynthesis; L-proline biosynthesis; L-glutamate 5-semialdehyde from L-glutamate: step 2/2. Catalyzes the NADPH-dependent reduction of L-glutamate 5-phosphate into L-glutamate 5-semialdehyde and phosphate. The product spontaneously undergoes cyclization to form 1-pyrroline-5-carboxylate. This chain is Gamma-glutamyl phosphate reductase, found in Paracidovorax citrulli (strain AAC00-1) (Acidovorax citrulli).